The primary structure comprises 344 residues: Mitochondrial mRNA pseudouridine synthase RPUSD3 (344 aa).

The N-terminal 41 residues, Met1–Gly41, are a transit peptide targeting the mitochondrion. The segment at Phe29–Arg59 is disordered. The segment covering Lys32–Ala42 has biased composition (basic residues). Phosphoserine is present on Ser64.

This sequence belongs to the pseudouridine synthase RluA family. As to quaternary structure, forms a regulatory protein-RNA complex, consisting of RCC1L, NGRN, RPUSD3, RPUSD4, TRUB2, FASTKD2 and 16S mt-rRNA.

It localises to the mitochondrion matrix. It carries out the reaction a uridine in mRNA = a pseudouridine in mRNA. Its function is as follows. Catalyzes uridine to pseudouridine isomerization (pseudouridylation) of specific mitochondrial mRNAs (mt-mRNAs), a post-transcriptional modification necessary for their translation. Acts at position 390 in COXI mt-mRNA and at position 697-699 in mitochondrial COXIII mt-mRNA. As a component of a functional protein-RNA module, consisting of RCC1L, NGRN, RPUSD3, RPUSD4, TRUB2, FASTKD2 and 16S mitochondrial ribosomal RNA (16S mt-rRNA), controls 16S mt-rRNA abundance and may play a role in mitochondrial ribosome biogenesis. This chain is Mitochondrial mRNA pseudouridine synthase RPUSD3 (RPUSD3), found in Bos taurus (Bovine).